A 509-amino-acid polypeptide reads, in one-letter code: Histidine--tRNA ligase, cytoplasmic (509 aa).

Ala2 is modified (N-acetylalanine). Positions 3–59 (ERAALEELVKLQGERVRGLKQQKASAELIEEEVAKLLKLKAQLGPDESKQKFVLKTP) constitute a WHEP-TRS domain. At Ser66 the chain carries Phosphoserine. L-histidine contacts are provided by residues 130–132 (DLT), Arg157, Gln173, Asp177, Arg326, and 330–331 (YY). Position 356 is a phosphoserine (Ser356).

The protein belongs to the class-II aminoacyl-tRNA synthetase family. As to quaternary structure, homodimer. As to expression, brain, heart, liver and kidney.

Its subcellular location is the cytoplasm. The enzyme catalyses tRNA(His) + L-histidine + ATP = L-histidyl-tRNA(His) + AMP + diphosphate + H(+). Catalyzes the ATP-dependent ligation of histidine to the 3'-end of its cognate tRNA, via the formation of an aminoacyl-adenylate intermediate (His-AMP). Plays a role in axon guidance. This chain is Histidine--tRNA ligase, cytoplasmic, found in Homo sapiens (Human).